Reading from the N-terminus, the 264-residue chain is Astacin-like metalloprotease toxin 1 (264 aa).

The signal sequence occupies residues 1 to 16; that stretch reads MIKYIGVFAFLVGGFC. A propeptide spanning residues 17 to 51 is cleaved from the precursor; sequence HDFETVISNQDPIVDGMRLVEGDMLFDDGPLFTER. One can recognise a Peptidase M12A domain in the interval 52-249; that stretch reads NAVKYDQQLW…VKVNKLYKCP (198 aa). 2 cysteine pairs are disulfide-bonded: Cys-93–Cys-248 and Cys-114–Cys-135. His-143 provides a ligand contact to Zn(2+). The active site involves Glu-144. Positions 147 and 153 each coordinate Zn(2+). N-linked (GlcNAc...) asparagine glycans are attached at residues Asn-173 and Asn-185.

As to quaternary structure, monomer. The cofactor is Zn(2+). As to expression, expressed by the venom gland.

The protein resides in the secreted. Its activity is regulated as follows. Inhibited by 1,10-phenanthroline. Functionally, zinc metalloprotease. Provoques deadhesion of endothelial cells from cell cultures, and also degradation of fibronectin, fibrinogen and gelatin in vitro. Its role in the venom is not fully understood but it might act as a spreading factor that facilitates diffusion of other venom toxins. Alternatively, it might be involved in the proteolytic processing of other venom toxins or it might play a role in extra-oral digestion of prey. The polypeptide is Astacin-like metalloprotease toxin 1 (Loxosceles intermedia (Brown spider)).